The primary structure comprises 431 residues: Transcription factor Sp7 (431 aa).

The tract at residues Ser-30–Ala-56 is disordered. N6-propionyllysine occurs at positions 41 and 45. Lys-58 participates in a covalent cross-link: Glycyl lysine isopeptide (Lys-Gly) (interchain with G-Cter in ubiquitin). Disordered stretches follow at residues Thr-71–Gly-115 and Thr-154–Tyr-260. A 9aaTAD motif is present at residues Thr-156–Gly-164. The segment covering Asn-166–Leu-178 has biased composition (gly residues). Residue Lys-230 forms a Glycyl lysine isopeptide (Lys-Gly) (interchain with G-Cter in ubiquitin) linkage. 3 C2H2-type zinc fingers span residues His-294 to His-318, Phe-324 to His-348, and Phe-354 to His-376. 2 positions are modified to N6-propionyllysine: Lys-361 and Lys-371. The tract at residues Asp-367–Ile-431 is disordered. The span at Ser-403–Pro-412 shows a compositional bias: polar residues.

Belongs to the Sp1 C2H2-type zinc-finger protein family. Interacts with RIOX1; the interaction is direct and inhibits transcription activator activity. Ubiquitination at leads to proteasomal degradation. SP7 is a short-live protein with an endogenous half-life of approximately 12 hours. In terms of processing, propionylated. Depropionylation at Lys-371 by SIRT7 activates transcription factor activity and positively regulates bone formation by osteoblasts. Restricted to bone-derived cell.

Its subcellular location is the nucleus. Transcriptional activator essential for osteoblast differentiation. Binds to SP1 and EKLF consensus sequences and to other G/C-rich sequences. The sequence is that of Transcription factor Sp7 (SP7) from Homo sapiens (Human).